Consider the following 238-residue polypeptide: Type III pantothenate kinase (238 aa).

An ATP-binding site is contributed by 7–14 (DAGNSGLK). Substrate contacts are provided by residues tyrosine 88 and 95 to 98 (GVDR). Aspartate 97 serves as the catalytic Proton acceptor. Aspartate 117 provides a ligand contact to K(+). Threonine 120 is an ATP binding site. Threonine 172 lines the substrate pocket.

Belongs to the type III pantothenate kinase family. In terms of assembly, homodimer. NH4(+) is required as a cofactor. It depends on K(+) as a cofactor.

It is found in the cytoplasm. The enzyme catalyses (R)-pantothenate + ATP = (R)-4'-phosphopantothenate + ADP + H(+). It participates in cofactor biosynthesis; coenzyme A biosynthesis; CoA from (R)-pantothenate: step 1/5. Its function is as follows. Catalyzes the phosphorylation of pantothenate (Pan), the first step in CoA biosynthesis. In Hahella chejuensis (strain KCTC 2396), this protein is Type III pantothenate kinase.